We begin with the raw amino-acid sequence, 261 residues long: UPF0246 protein azo1887 (261 aa).

This sequence belongs to the UPF0246 family.

This Azoarcus sp. (strain BH72) protein is UPF0246 protein azo1887.